Here is a 543-residue protein sequence, read N- to C-terminus: Chaperonin GroEL (543 aa).

ATP is bound by residues 29–32, 86–90, Gly413, 478–480, and Asp494; these read TLGP, DGTTT, and NAA.

Belongs to the chaperonin (HSP60) family. As to quaternary structure, forms a cylinder of 14 subunits composed of two heptameric rings stacked back-to-back. Interacts with the co-chaperonin GroES.

It is found in the cytoplasm. It carries out the reaction ATP + H2O + a folded polypeptide = ADP + phosphate + an unfolded polypeptide.. In terms of biological role, together with its co-chaperonin GroES, plays an essential role in assisting protein folding. The GroEL-GroES system forms a nano-cage that allows encapsulation of the non-native substrate proteins and provides a physical environment optimized to promote and accelerate protein folding. The polypeptide is Chaperonin GroEL (Lactobacillus gasseri (strain ATCC 33323 / DSM 20243 / BCRC 14619 / CIP 102991 / JCM 1131 / KCTC 3163 / NCIMB 11718 / NCTC 13722 / AM63)).